The primary structure comprises 295 residues: Glycine--tRNA ligase alpha subunit (295 aa).

It belongs to the class-II aminoacyl-tRNA synthetase family. As to quaternary structure, tetramer of two alpha and two beta subunits.

It is found in the cytoplasm. It carries out the reaction tRNA(Gly) + glycine + ATP = glycyl-tRNA(Gly) + AMP + diphosphate. In Rhodospirillum rubrum (strain ATCC 11170 / ATH 1.1.1 / DSM 467 / LMG 4362 / NCIMB 8255 / S1), this protein is Glycine--tRNA ligase alpha subunit.